Reading from the N-terminus, the 836-residue chain is Outer membrane usher protein PapC (836 aa).

Residues 1–24 form the signal peptide; the sequence is MKDRIPFAVNNITCVILLSLFCNA. C814 and C832 are oxidised to a cystine.

This sequence belongs to the fimbrial export usher family.

Its subcellular location is the cell outer membrane. Involved in the export and assembly of pili subunits across the outer membrane. Forms a hexameric ring-shaped pore in the outer bacterial membrane. The 2 nanometer-diameter pore allows the passage of the thin tip fibrillum. As for the rod, it probably unwinds into linear fibers which would therefore be narrow enough to pass through the pore. The protein is Outer membrane usher protein PapC (papC) of Escherichia coli.